The primary structure comprises 43 residues: Cytochrome b559 subunit beta (43 aa).

The helical transmembrane segment at 18 to 34 threads the bilayer; it reads WLAVHTLAIPTVFFLGA. H22 is a binding site for heme.

It belongs to the PsbE/PsbF family. Heterodimer of an alpha subunit and a beta subunit. PSII is composed of 1 copy each of membrane proteins PsbA, PsbB, PsbC, PsbD, PsbE, PsbF, PsbH, PsbI, PsbJ, PsbK, PsbL, PsbM, PsbT, PsbX, PsbY, PsbZ, Psb30/Ycf12, peripheral proteins PsbO, CyanoQ (PsbQ), PsbU, PsbV and a large number of cofactors. It forms dimeric complexes. Heme b serves as cofactor.

The protein resides in the cellular thylakoid membrane. Functionally, this b-type cytochrome is tightly associated with the reaction center of photosystem II (PSII). PSII is a light-driven water:plastoquinone oxidoreductase that uses light energy to abstract electrons from H(2)O, generating O(2) and a proton gradient subsequently used for ATP formation. It consists of a core antenna complex that captures photons, and an electron transfer chain that converts photonic excitation into a charge separation. The protein is Cytochrome b559 subunit beta of Synechococcus sp. (strain JA-2-3B'a(2-13)) (Cyanobacteria bacterium Yellowstone B-Prime).